The primary structure comprises 298 residues: Protease HtpX homolog (298 aa).

Transmembrane regions (helical) follow at residues 5 to 25 (IFLF…VLSV) and 45 to 65 (MALL…SLAI). Residue histidine 155 participates in Zn(2+) binding. Glutamate 156 is an active-site residue. Zn(2+) is bound at residue histidine 159. 2 consecutive transmembrane segments (helical) span residues 170-190 (LLQG…AWIA) and 204-224 (FIAM…VVFA). Glutamate 230 lines the Zn(2+) pocket.

Belongs to the peptidase M48B family. Zn(2+) is required as a cofactor.

It is found in the cell membrane. The polypeptide is Protease HtpX homolog (Bacillus subtilis (strain 168)).